The primary structure comprises 59 residues: Large ribosomal subunit protein bL32c (59 aa).

A disordered region spans residues 1–20 (MAVPKKRTSKSKKRIRKSVW).

This sequence belongs to the bacterial ribosomal protein bL32 family.

Its subcellular location is the plastid. It is found in the chloroplast. In Angiopteris evecta (Mule's foot fern), this protein is Large ribosomal subunit protein bL32c.